A 348-amino-acid chain; its full sequence is Beta-hexosaminidase (348 aa).

Substrate is bound by residues Asp64, Arg72, Arg138, and 168–169 (KH). The Proton donor/acceptor role is filled by His181. The active-site Nucleophile is Asp252.

The protein belongs to the glycosyl hydrolase 3 family. NagZ subfamily.

It is found in the cytoplasm. It catalyses the reaction Hydrolysis of terminal non-reducing N-acetyl-D-hexosamine residues in N-acetyl-beta-D-hexosaminides.. The protein operates within cell wall biogenesis; peptidoglycan recycling. Its function is as follows. Plays a role in peptidoglycan recycling by cleaving the terminal beta-1,4-linked N-acetylglucosamine (GlcNAc) from peptide-linked peptidoglycan fragments, giving rise to free GlcNAc, anhydro-N-acetylmuramic acid and anhydro-N-acetylmuramic acid-linked peptides. The protein is Beta-hexosaminidase of Nitrosomonas eutropha (strain DSM 101675 / C91 / Nm57).